The chain runs to 349 residues: 4-hydroxy-3-methylbut-2-enyl diphosphate reductase (349 aa).

C18 provides a ligand contact to [4Fe-4S] cluster. (2E)-4-hydroxy-3-methylbut-2-enyl diphosphate contacts are provided by H47 and H83. Dimethylallyl diphosphate contacts are provided by H47 and H83. Residues H47 and H83 each contribute to the isopentenyl diphosphate site. Residue C105 participates in [4Fe-4S] cluster binding. (2E)-4-hydroxy-3-methylbut-2-enyl diphosphate is bound at residue H133. Residue H133 coordinates dimethylallyl diphosphate. H133 is a binding site for isopentenyl diphosphate. Catalysis depends on E135, which acts as the Proton donor. (2E)-4-hydroxy-3-methylbut-2-enyl diphosphate is bound at residue T174. C204 serves as a coordination point for [4Fe-4S] cluster. The (2E)-4-hydroxy-3-methylbut-2-enyl diphosphate site is built by S232, S233, N234, and S277. Residues S232, S233, N234, and S277 each contribute to the dimethylallyl diphosphate site. S232, S233, N234, and S277 together coordinate isopentenyl diphosphate.

The protein belongs to the IspH family. [4Fe-4S] cluster is required as a cofactor.

The catalysed reaction is isopentenyl diphosphate + 2 oxidized [2Fe-2S]-[ferredoxin] + H2O = (2E)-4-hydroxy-3-methylbut-2-enyl diphosphate + 2 reduced [2Fe-2S]-[ferredoxin] + 2 H(+). It catalyses the reaction dimethylallyl diphosphate + 2 oxidized [2Fe-2S]-[ferredoxin] + H2O = (2E)-4-hydroxy-3-methylbut-2-enyl diphosphate + 2 reduced [2Fe-2S]-[ferredoxin] + 2 H(+). It functions in the pathway isoprenoid biosynthesis; dimethylallyl diphosphate biosynthesis; dimethylallyl diphosphate from (2E)-4-hydroxy-3-methylbutenyl diphosphate: step 1/1. Its pathway is isoprenoid biosynthesis; isopentenyl diphosphate biosynthesis via DXP pathway; isopentenyl diphosphate from 1-deoxy-D-xylulose 5-phosphate: step 6/6. In terms of biological role, catalyzes the conversion of 1-hydroxy-2-methyl-2-(E)-butenyl 4-diphosphate (HMBPP) into a mixture of isopentenyl diphosphate (IPP) and dimethylallyl diphosphate (DMAPP). Acts in the terminal step of the DOXP/MEP pathway for isoprenoid precursor biosynthesis. The protein is 4-hydroxy-3-methylbut-2-enyl diphosphate reductase of Bartonella bacilliformis (strain ATCC 35685 / KC583 / Herrer 020/F12,63).